Here is a 461-residue protein sequence, read N- to C-terminus: Photosystem II CP43 reaction center protein (461 aa).

Positions 1 to 2 (ME) are excised as a propeptide. Thr3 carries the post-translational modification N-acetylthreonine. Thr3 is modified (phosphothreonine). The next 5 helical transmembrane spans lie at 57–81 (LFEV…PHLA), 122–143 (LLGP…KDRN), 166–188 (KALY…RKIT), 243–263 (KPFA…LSYS), and 279–300 (WFNN…ASQA). Glu355 provides a ligand contact to [CaMn4O5] cluster. A helical membrane pass occupies residues 435 to 459 (RARAAAAGFEKGIDRDLEPVLSMTP).

This sequence belongs to the PsbB/PsbC family. PsbC subfamily. PSII is composed of 1 copy each of membrane proteins PsbA, PsbB, PsbC, PsbD, PsbE, PsbF, PsbH, PsbI, PsbJ, PsbK, PsbL, PsbM, PsbT, PsbX, PsbY, PsbZ, Psb30/Ycf12, at least 3 peripheral proteins of the oxygen-evolving complex and a large number of cofactors. It forms dimeric complexes. Requires Binds multiple chlorophylls and provides some of the ligands for the Ca-4Mn-5O cluster of the oxygen-evolving complex. It may also provide a ligand for a Cl- that is required for oxygen evolution. PSII binds additional chlorophylls, carotenoids and specific lipids. as cofactor.

It localises to the plastid. It is found in the chloroplast thylakoid membrane. Its function is as follows. One of the components of the core complex of photosystem II (PSII). It binds chlorophyll and helps catalyze the primary light-induced photochemical processes of PSII. PSII is a light-driven water:plastoquinone oxidoreductase, using light energy to abstract electrons from H(2)O, generating O(2) and a proton gradient subsequently used for ATP formation. This Ceratophyllum demersum (Rigid hornwort) protein is Photosystem II CP43 reaction center protein.